The chain runs to 421 residues: O-glycosyltransferase braB (421 aa).

A disordered region spans residues 1–26; the sequence is MVPSVMEGAPQLGITSTDTSSAGVPP. The segment covering 13–22 has biased composition (polar residues); the sequence is GITSTDTSSA.

Belongs to the afumC glycosyltransferase family.

It participates in secondary metabolite biosynthesis. Functionally, O-glycosyltransferase; part of the gene cluster that mediates the biosynthesis of the brasilane terpene glycosides brasilane D and E. The biosynthesis starts with the activity of the terpene cyclase braA that converts farnesyl pyrophosphate into the sesquiterpene alcohol trichobrasilenol. Subsequently, trichobrasilenol is glycosylated by the O-glycosyltransferase braB putatively using UDP-GlcNAc as sugar donor to yield brasilane A. The latter then undergoes two rounds of oxidation performed by the cytochrome P450 monooxygenase braC. In the first round braC hydroxylates C-12 forming brasilane D, which serves as substrate in the second round to establish the epoxide at the bond between C-5 and C-10 and oxidize the alcohol at C-12 to an aldehyde leading to the final product brasilane E. BraB is also able to glycosylate geraniol, linalool, perillyl alcohol, 3,4-dichlorophenol and, to a lesser extend, benzyl alcohol. The sequence is that of O-glycosyltransferase braB from Annulohypoxylon truncatum (Hypoxylon truncatum).